The sequence spans 397 residues: Enoyl-[acyl-carrier-protein] reductase [NADH] (397 aa).

NAD(+)-binding positions include 47 to 52, 73 to 74, 110 to 111, and 138 to 139; these read GASTGY, LE, DA, and LA. Tyr-224 contacts substrate. Tyr-234 serves as the catalytic Proton donor. NAD(+) is bound by residues Lys-243 and 272–274; that span reads LVT.

It belongs to the TER reductase family. In terms of assembly, monomer.

The enzyme catalyses a 2,3-saturated acyl-[ACP] + NAD(+) = a (2E)-enoyl-[ACP] + NADH + H(+). It functions in the pathway lipid metabolism; fatty acid biosynthesis. Involved in the final reduction of the elongation cycle of fatty acid synthesis (FAS II). Catalyzes the reduction of a carbon-carbon double bond in an enoyl moiety that is covalently linked to an acyl carrier protein (ACP). The polypeptide is Enoyl-[acyl-carrier-protein] reductase [NADH] (Methylobacillus flagellatus (strain ATCC 51484 / DSM 6875 / VKM B-1610 / KT)).